A 331-amino-acid chain; its full sequence is ESX-3 secretion system protein EccE3 (331 aa).

Transmembrane regions (helical) follow at residues 11 to 31 (GRVT…PWQS) and 37 to 57 (LLGV…GLYF).

Belongs to the EccE family. Part of the ESX-3 / type VII secretion system (T7SS), which is composed of cytosolic and membrane components. The ESX-3 membrane complex is composed of EccB3, EccC3, EccD3 and EccE3.

Its subcellular location is the cell inner membrane. In terms of biological role, part of the ESX-3 specialized secretion system, which is important for iron and zinc uptake or homeostasis. This Mycobacterium tuberculosis (strain CDC 1551 / Oshkosh) protein is ESX-3 secretion system protein EccE3.